Here is a 624-residue protein sequence, read N- to C-terminus: Polygalacturonase 1 beta-like protein 2 (624 aa).

Positions 1-26 are cleaved as a signal peptide; the sequence is MNNIEATLFLCFFCIFSSSNVHFAGA. The stretch at 121–124 is one FXXY 1 repeat; the sequence is FAAY. N-linked (GlcNAc...) asparagine glycosylation is present at N128. FXXY repeat units follow at residues 129 to 132, 143 to 146, 157 to 160, 171 to 174, 185 to 188, 199 to 202, 213 to 216, 227 to 230, 241 to 244, 255 to 258, and 269 to 272; these read FTNY, FKNY, FRRY, FTTY, FTSY, FSGY, and FTKY. N-linked (GlcNAc...) asparagine glycosylation occurs at N145. The interval 199 to 219 is disordered; the sequence is FTNYNTDANEPNGRFTSYSDK. Residue N280 is glycosylated (N-linked (GlcNAc...) asparagine). 5 FXXY repeats span residues 283 to 286, 297 to 300, 311 to 314, 325 to 328, and 339 to 342; these read FTSY, FKGY, FKNY, FSSY, and FVNY. The N-linked (GlcNAc...) asparagine glycan is linked to N352. One copy of the FXXY 18 repeat lies at 353–356; sequence FTGY. N364 carries an N-linked (GlcNAc...) asparagine glycan. 3 FXXY repeats span residues 367–370, 376–379, and 386–389; these read FKTY, FKVY, and FARY. N-linked (GlcNAc...) asparagine glycosylation is found at N392 and N463. In terms of domain architecture, BURP spans 409–623; that stretch reads FFREAMLKEG…FENDMTWNII (215 aa).

Expressed in flowers and stems.

It localises to the secreted. Its subcellular location is the extracellular space. The protein resides in the apoplast. It is found in the cell wall. Functionally, involved in cell size determination. The sequence is that of Polygalacturonase 1 beta-like protein 2 from Arabidopsis thaliana (Mouse-ear cress).